Reading from the N-terminus, the 503-residue chain is Cytochrome P450 3A14 (503 aa).

C442 lines the heme pocket.

This sequence belongs to the cytochrome P450 family. It depends on heme as a cofactor.

The protein localises to the endoplasmic reticulum membrane. Its subcellular location is the microsome membrane. The catalysed reaction is an organic molecule + reduced [NADPH--hemoprotein reductase] + O2 = an alcohol + oxidized [NADPH--hemoprotein reductase] + H2O + H(+). In terms of biological role, cytochromes P450 are a group of heme-thiolate monooxygenases. In liver microsomes, this enzyme is involved in an NADPH-dependent electron transport pathway. It oxidizes a variety of structurally unrelated compounds, including steroids, fatty acids, and xenobiotics. The protein is Cytochrome P450 3A14 (CYP3A14) of Cavia porcellus (Guinea pig).